Here is a 160-residue protein sequence, read N- to C-terminus: MMPAKLQLDVLRTLQSSARHGTQTLKNSNFLERFHKDRIVFCLPFFPALFFVPVQKVLQHLCLRFTQVAPYFIIQLFDLPSRHAENLAPLLASCRIQYTNCFSSSSNGQVPSIISLYLRVDLSPFYAKIFQISYRVPMIWLDVFQVFFVFLVISQHSLHS.

The next 2 helical transmembrane spans lie at 39 to 59 and 136 to 156; these read IVFC…KVLQ and VPMI…ISQH.

Belongs to the UPF0479 family.

The protein resides in the membrane. The sequence is that of UPF0479 membrane protein YER190C-B from Saccharomyces cerevisiae (strain ATCC 204508 / S288c) (Baker's yeast).